Here is a 106-residue protein sequence, read N- to C-terminus: BLOC-1-related complex subunit 7 (106 aa).

It belongs to the BORCS7 family. As to quaternary structure, component of the BLOC-one-related complex (BORC) which is composed of BLOC1S1, BLOC1S2, BORCS5, BORCS6, BORCS7, BORCS8, KXD1 and SNAPIN.

Its subcellular location is the lysosome membrane. Its function is as follows. As part of the BORC complex may play a role in lysosomes movement and localization at the cell periphery. Associated with the cytosolic face of lysosomes, the BORC complex may recruit ARL8B and couple lysosomes to microtubule plus-end-directed kinesin motor. In Pongo abelii (Sumatran orangutan), this protein is BLOC-1-related complex subunit 7.